We begin with the raw amino-acid sequence, 65 residues long: Large ribosomal subunit protein bL35 (65 aa).

The interval 23-44 is disordered; that stretch reads KRMKAGKQHILTKKSQKTKRNL.

The protein belongs to the bacterial ribosomal protein bL35 family.

The protein is Large ribosomal subunit protein bL35 of Lachnoclostridium phytofermentans (strain ATCC 700394 / DSM 18823 / ISDg) (Clostridium phytofermentans).